A 1253-amino-acid chain; its full sequence is Methionine synthase (1253 aa).

The Hcy-binding domain occupies 6–326; it reads QDEIEAILRK…DHIREIAEAV (321 aa). 3 residues coordinate Zn(2+): cysteine 248, cysteine 311, and cysteine 312. A Pterin-binding domain is found at 359-620; the sequence is FVNIGERCNV…IHKDLLQLCE (262 aa). Residues 370-372, aspartate 437, asparagine 458, aspartate 525, asparagine 567, arginine 573, and arginine 579 each bind (6S)-5,6,7,8-tetrahydrofolate; that span reads GSK. One can recognise a B12-binding N-terminal domain in the interval 650-747; it reads QTDEWRNGSI…FMEKEREEAR (98 aa). Methylcob(III)alamin contacts are provided by residues glutamate 697, 770–774, histidine 773, serine 818, threonine 822, and alanine 874; that span reads GDVHD. The B12-binding domain maps to 760–895; the sequence is QGTIVLATVK…DENLKDDYFE (136 aa). The AdoMet activation domain occupies 911–1253; sequence SLKERKYLPL…LGPILGYDTD (343 aa). Residues aspartate 962, arginine 1160, and 1215 to 1216 contribute to the S-adenosyl-L-methionine site; that span reads YF. Position 1252 is a phosphothreonine (threonine 1252).

It belongs to the vitamin-B12 dependent methionine synthase family. Monomer. Dimer. Forms a multiprotein complex with MMACHC, MMADHC and MTRR. Methylcob(III)alamin is required as a cofactor. The cofactor is Zn(2+).

Its subcellular location is the cytoplasm. The catalysed reaction is (6S)-5-methyl-5,6,7,8-tetrahydrofolate + L-homocysteine = (6S)-5,6,7,8-tetrahydrofolate + L-methionine. It participates in amino-acid biosynthesis; L-methionine biosynthesis via de novo pathway; L-methionine from L-homocysteine (MetH route): step 1/1. Its function is as follows. Catalyzes the transfer of a methyl group from methylcob(III)alamin (MeCbl) to homocysteine, yielding enzyme-bound cob(I)alamin and methionine in the cytosol. MeCbl is an active form of cobalamin (vitamin B12) used as a cofactor for methionine biosynthesis. Cob(I)alamin form is regenerated to MeCbl by a transfer of a methyl group from 5-methyltetrahydrofolate. The processing of cobalamin in the cytosol occurs in a multiprotein complex composed of at least MMACHC, MMADHC, MTRR (methionine synthase reductase) and MTR which may contribute to shuttle safely and efficiently cobalamin towards MTR in order to produce methionine. The chain is Methionine synthase (Mtr) from Rattus norvegicus (Rat).